The sequence spans 326 residues: Glutamine synthetase (326 aa).

A GS beta-grasp domain is found at 4–85 (FKLEYIWLDG…VMCEVMMPDG (82 aa)). Residues 83-326 (PDGHAHASNA…GDPYQIVRRF (244 aa)) form the GS catalytic domain. The Mg(2+) site is built by Glu-107 and Glu-109. Glu-164 is a binding site for ATP. Glu-169 and Glu-176 together coordinate Mg(2+). Glu-275 is an L-glutamate binding site.

It belongs to the glutamine synthetase family. In terms of assembly, homooctamer and homotetramer. Requires Mg(2+) as cofactor.

It localises to the cytoplasm. The catalysed reaction is L-glutamate + NH4(+) + ATP = L-glutamine + ADP + phosphate + H(+). Its activity is regulated as follows. Transferase activity is inhibited by NH(4)Cl. Catalyzes the ATP-dependent biosynthesis of glutamine from glutamate and ammonia. The chain is Glutamine synthetase from Rhizobium leguminosarum bv. phaseoli.